The sequence spans 250 residues: 5'-nucleotidase SurE (250 aa).

Residues Asp-8, Asp-9, Ser-40, and Asn-94 each coordinate a divalent metal cation.

This sequence belongs to the SurE nucleotidase family. A divalent metal cation is required as a cofactor.

Its subcellular location is the cytoplasm. The enzyme catalyses a ribonucleoside 5'-phosphate + H2O = a ribonucleoside + phosphate. Its function is as follows. Nucleotidase that shows phosphatase activity on nucleoside 5'-monophosphates. This is 5'-nucleotidase SurE from Wolbachia sp. subsp. Brugia malayi (strain TRS).